A 77-amino-acid chain; its full sequence is Small, acid-soluble spore protein Tlp (77 aa).

This sequence belongs to the Tlp family.

The protein resides in the spore core. This is Small, acid-soluble spore protein Tlp from Geobacillus sp. (strain WCH70).